The chain runs to 107 residues: UPF0145 protein CKO_02237 (107 aa).

The protein belongs to the UPF0145 family.

The chain is UPF0145 protein CKO_02237 from Citrobacter koseri (strain ATCC BAA-895 / CDC 4225-83 / SGSC4696).